Here is a 32-residue protein sequence, read N- to C-terminus: Defensin-3 (32 aa).

Intrachain disulfides connect Cys-3/Cys-31, Cys-5/Cys-20, and Cys-10/Cys-30.

The protein resides in the secreted. Has antibacterial activity against the Gram-negative bacterium E.coli and the Gram-positive bacteria L.monocytogenes and S.aureus. Has antifungal activity against C.albicans. This is Defensin-3 from Papio hamadryas (Hamadryas baboon).